Reading from the N-terminus, the 195-residue chain is GTP-dependent dephospho-CoA kinase (195 aa).

Positions 49, 50, 68, 127, and 150 each coordinate GTP.

Belongs to the GTP-dependent DPCK family.

The enzyme catalyses 3'-dephospho-CoA + GTP = GDP + CoA + H(+). It functions in the pathway cofactor biosynthesis; coenzyme A biosynthesis. Catalyzes the GTP-dependent phosphorylation of the 3'-hydroxyl group of dephosphocoenzyme A to form coenzyme A (CoA). This chain is GTP-dependent dephospho-CoA kinase, found in Methanosarcina acetivorans (strain ATCC 35395 / DSM 2834 / JCM 12185 / C2A).